The sequence spans 760 residues: Xaa-Pro dipeptidyl-peptidase (760 aa).

Catalysis depends on charge relay system residues Ser349, Asp469, and His499.

It belongs to the peptidase S15 family. Homodimer.

The protein localises to the cytoplasm. It carries out the reaction Hydrolyzes Xaa-Pro-|- bonds to release unblocked, N-terminal dipeptides from substrates including Ala-Pro-|-p-nitroanilide and (sequentially) Tyr-Pro-|-Phe-Pro-|-Gly-Pro-|-Ile.. Its function is as follows. Removes N-terminal dipeptides sequentially from polypeptides having unsubstituted N-termini provided that the penultimate residue is proline. This Streptococcus pyogenes serotype M2 (strain MGAS10270) protein is Xaa-Pro dipeptidyl-peptidase.